The chain runs to 614 residues: MPAYRSRTTTHGRNMAGARGLWRATGMKDSDFGKPIIAVVNSFTQFVPGHVHLKDLGQLVAREIEKAGGVAKEFNTIAVDDGIAMGHDGMLYSLPSRELIADSVEYMVNAHCADAMVCISNCDKITPGMLMASLRLNIPTVFVSGGPMEAGKVVLAGKTQALDLVDAMVAAADDKISDEDVKVIERSACPTCGSCSGMFTANSMNCLTEALGLSLPGNGSTLATHADRKRLFVEAGHLIVDLAQRYYEQDDETALPRSIASKGAFENAMTLDIAMGGSTNTVLHILAAAHEGEVDFTMEDIDRLSRRVPVLCKVAPAKSDVHMEDVHRAGGIMAILGQLDNAGLINRDLPTVHTSSLGEALDHWDISRTSSQNVRDFFLAAPGGVPTQVAFSQDRRWDELDLDREKGVIRSAETPFSKDGGLAVLKGNLALDGCIVKTAGVDESILKFTGPARVFESQDASVKAILSNEIKAGDVVVIRYEGPRGGPGMQEMLYPTSYLKSKGLGKACALVTDGRFSGGTSGLSIGHASPEAAEGGTIGLVQEGDTIEIDIPNRTIRLAVSDAELDSRRAAMEAKGALAWKPEEKRKRKVTTALRAYAAFATSADKGAVRHVPE.

Aspartate 81 provides a ligand contact to Mg(2+). A [2Fe-2S] cluster-binding site is contributed by cysteine 122. The Mg(2+) site is built by aspartate 123 and lysine 124. An N6-carboxylysine modification is found at lysine 124. Cysteine 195 provides a ligand contact to [2Fe-2S] cluster. Glutamate 491 serves as a coordination point for Mg(2+). The Proton acceptor role is filled by serine 517.

This sequence belongs to the IlvD/Edd family. In terms of assembly, homodimer. [2Fe-2S] cluster serves as cofactor. It depends on Mg(2+) as a cofactor.

The catalysed reaction is (2R)-2,3-dihydroxy-3-methylbutanoate = 3-methyl-2-oxobutanoate + H2O. It catalyses the reaction (2R,3R)-2,3-dihydroxy-3-methylpentanoate = (S)-3-methyl-2-oxopentanoate + H2O. It functions in the pathway amino-acid biosynthesis; L-isoleucine biosynthesis; L-isoleucine from 2-oxobutanoate: step 3/4. The protein operates within amino-acid biosynthesis; L-valine biosynthesis; L-valine from pyruvate: step 3/4. In terms of biological role, functions in the biosynthesis of branched-chain amino acids. Catalyzes the dehydration of (2R,3R)-2,3-dihydroxy-3-methylpentanoate (2,3-dihydroxy-3-methylvalerate) into 2-oxo-3-methylpentanoate (2-oxo-3-methylvalerate) and of (2R)-2,3-dihydroxy-3-methylbutanoate (2,3-dihydroxyisovalerate) into 2-oxo-3-methylbutanoate (2-oxoisovalerate), the penultimate precursor to L-isoleucine and L-valine, respectively. The chain is Dihydroxy-acid dehydratase 1 from Mesorhizobium japonicum (strain LMG 29417 / CECT 9101 / MAFF 303099) (Mesorhizobium loti (strain MAFF 303099)).